The following is a 474-amino-acid chain: uncharacterized protein (474 aa).

This is an uncharacterized protein from Magallana gigas (Pacific oyster).